The chain runs to 300 residues: Acetylglutamate kinase (300 aa).

Residues 73 to 74 (GG), R95, and N197 each bind substrate.

The protein belongs to the acetylglutamate kinase family. ArgB subfamily.

The protein resides in the cytoplasm. It carries out the reaction N-acetyl-L-glutamate + ATP = N-acetyl-L-glutamyl 5-phosphate + ADP. It functions in the pathway amino-acid biosynthesis; L-arginine biosynthesis; N(2)-acetyl-L-ornithine from L-glutamate: step 2/4. Its function is as follows. Catalyzes the ATP-dependent phosphorylation of N-acetyl-L-glutamate. The protein is Acetylglutamate kinase of Bordetella avium (strain 197N).